The sequence spans 328 residues: Aspartate carbamoyltransferase catalytic subunit (328 aa).

The carbamoyl phosphate site is built by Arg70 and Thr71. Lys98 contacts L-aspartate. Carbamoyl phosphate contacts are provided by Arg120, His150, and Gln153. L-aspartate-binding residues include Arg183 and Arg238. Gly279 and Pro280 together coordinate carbamoyl phosphate.

It belongs to the aspartate/ornithine carbamoyltransferase superfamily. ATCase family. Heterododecamer (2C3:3R2) of six catalytic PyrB chains organized as two trimers (C3), and six regulatory PyrI chains organized as three dimers (R2).

It carries out the reaction carbamoyl phosphate + L-aspartate = N-carbamoyl-L-aspartate + phosphate + H(+). Its pathway is pyrimidine metabolism; UMP biosynthesis via de novo pathway; (S)-dihydroorotate from bicarbonate: step 2/3. Its function is as follows. Catalyzes the condensation of carbamoyl phosphate and aspartate to form carbamoyl aspartate and inorganic phosphate, the committed step in the de novo pyrimidine nucleotide biosynthesis pathway. The sequence is that of Aspartate carbamoyltransferase catalytic subunit from Methylococcus capsulatus (strain ATCC 33009 / NCIMB 11132 / Bath).